We begin with the raw amino-acid sequence, 252 residues long: Phosphate import ATP-binding protein PstB 1 (252 aa).

Residues 6–247 (LQVSDLSVYY…PKHKETEDYI (242 aa)) form the ABC transporter domain. Residue 38-45 (GPSGSGKS) coordinates ATP.

Belongs to the ABC transporter superfamily. Phosphate importer (TC 3.A.1.7) family. In terms of assembly, the complex is composed of two ATP-binding proteins (PstB), two transmembrane proteins (PstC and PstA) and a solute-binding protein (PstS).

The protein resides in the cell membrane. It catalyses the reaction phosphate(out) + ATP + H2O = ADP + 2 phosphate(in) + H(+). Its function is as follows. Part of the ABC transporter complex PstSACB involved in phosphate import. Responsible for energy coupling to the transport system. This Streptococcus agalactiae serotype Ia (strain ATCC 27591 / A909 / CDC SS700) protein is Phosphate import ATP-binding protein PstB 1.